Here is a 1209-residue protein sequence, read N- to C-terminus: Protein FAM83H (1209 aa).

The DUF1669 stretch occupies residues 1–286 (MARRSQSSSQ…LFAQSEPLVP (286 aa)). Residues 1–286 (MARRSQSSSQ…LFAQSEPLVP (286 aa)) are mediates interaction with CSNK1A1 and is required for FAM83H activity in keratin cytoskeleton organization. Residues Ser512, Ser513, Ser515, Ser522, Ser639, and Ser660 each carry the phosphoserine modification. 3 disordered regions span residues 512-545 (SSAS…NLGQ), 615-664 (RDLL…FRSR), and 735-760 (KGPA…VVSQ). Thr749 is modified (phosphothreonine). A phosphoserine mark is found at Ser752, Ser778, Ser806, and Ser871. A disordered region spans residues 829–1056 (AQGRSLSPQG…EERGSRVRLA (228 aa)). Residue Thr873 is modified to Phosphothreonine. Residues Ser882, Ser893, Ser904, and Ser915 each carry the phosphoserine modification. Polar residues predominate over residues 915–942 (SPTSGFPNRRGSPTTGLMEQKGSPTSTY). Position 917 is a phosphothreonine (Thr917). Ser926 is subject to Phosphoserine. Thr928 is subject to Phosphothreonine. A phosphoserine mark is found at Ser937, Ser948, Ser959, Ser970, Ser977, Ser1035, Ser1041, and Ser1057. Thr1072 bears the Phosphothreonine mark. Disordered regions lie at residues 1076-1147 (LEQI…EERD) and 1174-1193 (EAGS…RDSK). Phosphoserine is present on residues Ser1080, Ser1098, and Ser1177.

Belongs to the FAM83 family. In terms of assembly, directly interacts (via DUF1669) with casein kinase isoforms CSNK1A1, CSNK1A1L, CSNK1D and CSNK1E. Interaction with CSNK1A1 recruits CSNK1A1 to keratin filaments. Interacts with KRT18 and probably other keratins. In terms of tissue distribution, expressed in tooth follicle, eye, liver and kidney.

It localises to the cytoplasm. It is found in the cytoskeleton. Its function is as follows. May play a major role in the structural organization and calcification of developing enamel. May play a role in keratin cytoskeleton disassembly by recruiting CSNK1A1 to keratin filaments. Thereby, it may regulate epithelial cell migration. The sequence is that of Protein FAM83H from Mus musculus (Mouse).